Consider the following 298-residue polypeptide: GTP cyclohydrolase FolE2 (298 aa).

It belongs to the GTP cyclohydrolase IV family.

It carries out the reaction GTP + H2O = 7,8-dihydroneopterin 3'-triphosphate + formate + H(+). Its pathway is cofactor biosynthesis; 7,8-dihydroneopterin triphosphate biosynthesis; 7,8-dihydroneopterin triphosphate from GTP: step 1/1. Functionally, converts GTP to 7,8-dihydroneopterin triphosphate. This is GTP cyclohydrolase FolE2 from Neisseria meningitidis serogroup A / serotype 4A (strain DSM 15465 / Z2491).